A 439-amino-acid polypeptide reads, in one-letter code: Nitroalkane oxidase (439 aa).

FAD contacts are provided by residues 131–134, 139–141, 169–171, Arg304, 313–314, 375–379, and 400–404; these read LMHS, TAN, WPS, HQ, KAVGM, and LFDGG. Asp402 functions as the Proton acceptor in the catalytic mechanism.

The protein belongs to the acyl-CoA dehydrogenase family. In terms of assembly, homotetramer. The cofactor is FAD.

It catalyses the reaction a primary nitroalkane + O2 + H2O = an aldehyde + nitrite + H2O2 + H(+). The enzyme catalyses a secondary nitroalkane + O2 + H2O = a ketone + nitrite + H2O2 + H(+). Strongly inhibited by mercury chloride and KCN. Its function is as follows. Catalyzes the oxidative denitrification of neutral nitroalkanes, including 3-nitro-2-pentanol, 1-nitropropane, 2-nitropropane, nitroethane and nitrocyclohexane, and may thereby protect the organism against toxic compounds. Has no detectable acyl-CoA dehydrogenase activity. The chain is Nitroalkane oxidase from Fusarium oxysporum (Fusarium vascular wilt).